Consider the following 313-residue polypeptide: Methionyl-tRNA formyltransferase (313 aa).

Residue Ser112–Pro115 coordinates (6S)-5,6,7,8-tetrahydrofolate.

The protein belongs to the Fmt family.

The enzyme catalyses L-methionyl-tRNA(fMet) + (6R)-10-formyltetrahydrofolate = N-formyl-L-methionyl-tRNA(fMet) + (6S)-5,6,7,8-tetrahydrofolate + H(+). Functionally, attaches a formyl group to the free amino group of methionyl-tRNA(fMet). The formyl group appears to play a dual role in the initiator identity of N-formylmethionyl-tRNA by promoting its recognition by IF2 and preventing the misappropriation of this tRNA by the elongation apparatus. In Roseiflexus castenholzii (strain DSM 13941 / HLO8), this protein is Methionyl-tRNA formyltransferase.